The following is a 125-amino-acid chain: Temptin (125 aa).

Residues 1–22 (MEQKRTLRVFLAVSLLCALANA) form the signal peptide. Cystine bridges form between Cys-40/Cys-125 and Cys-79/Cys-99. The disordered stretch occupies residues 78-125 (LCDMDSDGDGRSNGVELGDPECVWSQGETPARTTDLSHPGFDEATVSC). The segment covering 103–113 (QGETPARTTDL) has biased composition (polar residues).

Binds to attractin and enticin. As to expression, produced by the albumen gland of the egg cordons.

The protein resides in the secreted. A component of the complex of water-borne protein pheromones that stimulates attraction and mating behavior. Modulates pheromone signaling by direct binding to attractin. The polypeptide is Temptin (Aplysia californica (California sea hare)).